We begin with the raw amino-acid sequence, 273 residues long: MRGLGKGSSAITVVNAFATGKGGAIGIDLWTEAKVKITDGEVKGKILVNGLEFNDFRVVNAVLDVMRRYSGIEFGIEFEINSEIPVGKGLKSSSAVANALVEAIARALRLNIPGIKVVKLGVEAAKKAGVTLTGAFDDACASYFGGLCLTDNLRVELLKRIEIDELPVVILVPNETVLTEELKGVDFLKIAPYVEEAFKLAIKGEWKKALVLNGLIYSTFLSYPPEPISKALHLGAVVGLSGKGPSVFAITDEPERIEEVWREFGDVIITSTR.

Residue 85–95 (PVGKGLKSSSA) participates in ATP binding.

It belongs to the GHMP kinase family. Archaeal shikimate kinase subfamily.

It is found in the cytoplasm. It carries out the reaction shikimate + ATP = 3-phosphoshikimate + ADP + H(+). It participates in metabolic intermediate biosynthesis; chorismate biosynthesis; chorismate from D-erythrose 4-phosphate and phosphoenolpyruvate: step 5/7. This is Shikimate kinase from Pyrococcus furiosus (strain ATCC 43587 / DSM 3638 / JCM 8422 / Vc1).